The following is a 202-amino-acid chain: Glycerol-3-phosphate acyltransferase (202 aa).

4 helical membrane-spanning segments follow: residues 11 to 31 (VLIAALVLGYACGAIPFGLIL), 87 to 107 (PALAAGLGAFLGHLFPVWLGF), 116 to 136 (FIGVLLALSPVTLAAFAAIWL), and 158 to 178 (LILWALGHGAVAALFLVLAAL).

The protein belongs to the PlsY family. In terms of assembly, probably interacts with PlsX.

It localises to the cell inner membrane. The catalysed reaction is an acyl phosphate + sn-glycerol 3-phosphate = a 1-acyl-sn-glycero-3-phosphate + phosphate. The protein operates within lipid metabolism; phospholipid metabolism. In terms of biological role, catalyzes the transfer of an acyl group from acyl-phosphate (acyl-PO(4)) to glycerol-3-phosphate (G3P) to form lysophosphatidic acid (LPA). This enzyme utilizes acyl-phosphate as fatty acyl donor, but not acyl-CoA or acyl-ACP. The chain is Glycerol-3-phosphate acyltransferase from Methylorubrum extorquens (strain PA1) (Methylobacterium extorquens).